Here is a 329-residue protein sequence, read N- to C-terminus: Cathepsin K (329 aa).

Positions 1 to 15 are cleaved as a signal peptide; the sequence is MWGLKVLLLPVVSFA. The propeptide at 16-114 is activation peptide; it reads LYPEEILDTH…TLYIPEWEGR (99 aa). A glycan (N-linked (GlcNAc...) asparagine) is linked at N103. Intrachain disulfides connect C136-C177, C170-C210, and C269-C318. C139 is an active-site residue. Catalysis depends on residues H276 and N296.

The protein belongs to the peptidase C1 family. In terms of tissue distribution, predominantly expressed in osteoclasts (bones). Expressed in thyroid epithelial cells.

It localises to the lysosome. It is found in the secreted. The protein localises to the apical cell membrane. It carries out the reaction Broad proteolytic activity. With small-molecule substrates and inhibitors, the major determinant of specificity is P2, which is preferably Leu, Met &gt; Phe, and not Arg.. Its function is as follows. Thiol protease involved in osteoclastic bone resorption and may participate partially in the disorder of bone remodeling. Displays potent endoprotease activity against fibrinogen at acid pH. May play an important role in extracellular matrix degradation. Involved in the release of thyroid hormone thyroxine (T4) by limited proteolysis of TG/thyroglobulin in the thyroid follicle lumen. The protein is Cathepsin K (CTSK) of Homo sapiens (Human).